The chain runs to 311 residues: MRKTNVSHLVDHFNMTILSGEEGLGREITVTDLSRPGLQLAGYYSYFAEERIQLFGLTEINFFQTLTPEERLERMNFLMQSQVPCFCVTRNQMVPEEMIDVSNRLGVPVLQSPLATTTLVGKVTNFLENRLAPTTTIHGVLTDIYGVGVLIMGSSGIGKSEAALELVKRGHRLVADDAVEIKQTQGGQLSGSAPELIQHLLEIRGVGIINIMTMFGAGAVRNVKNIEMVVQLELWEPHKMYERLGLDEETLKIMDTEIPIITVPVRPGRNLAVIIEVAAMNFRLKRMGYNAAMHFTRKQSNAILEDADSDL.

Catalysis depends on residues His138 and Lys159. Residue 153–160 (GSSGIGKS) participates in ATP binding. A Mg(2+)-binding site is contributed by Ser160. Residue Asp177 is the Proton acceptor; for phosphorylation activity. Proton donor; for dephosphorylation activity of the active site. An important for the catalytic mechanism of both phosphorylation and dephosphorylation region spans residues 201-210 (LEIRGVGIIN). Mg(2+) is bound at residue Glu202. The active site involves Arg243. The segment at 264–269 (PVRPGR) is important for the catalytic mechanism of dephosphorylation.

The protein belongs to the HPrK/P family. In terms of assembly, homohexamer. Mg(2+) is required as a cofactor.

It catalyses the reaction [HPr protein]-L-serine + ATP = [HPr protein]-O-phospho-L-serine + ADP + H(+). The enzyme catalyses [HPr protein]-O-phospho-L-serine + phosphate + H(+) = [HPr protein]-L-serine + diphosphate. Functionally, catalyzes the ATP- as well as the pyrophosphate-dependent phosphorylation of a specific serine residue in HPr, a phosphocarrier protein of the phosphoenolpyruvate-dependent sugar phosphotransferase system (PTS). HprK/P also catalyzes the pyrophosphate-producing, inorganic phosphate-dependent dephosphorylation (phosphorolysis) of seryl-phosphorylated HPr (P-Ser-HPr). The two antagonistic activities of HprK/P are regulated by several intracellular metabolites, which change their concentration in response to the absence or presence of rapidly metabolisable carbon sources (glucose, fructose, etc.) in the growth medium. Therefore, by controlling the phosphorylation state of HPr, HPrK/P is a sensor enzyme that plays a major role in the regulation of carbon metabolism and sugar transport: it mediates carbon catabolite repression (CCR), and regulates PTS-catalyzed carbohydrate uptake and inducer exclusion. The polypeptide is HPr kinase/phosphorylase (Brevibacillus brevis (strain 47 / JCM 6285 / NBRC 100599)).